A 534-amino-acid polypeptide reads, in one-letter code: 2,3-bisphosphoglycerate-independent phosphoglycerate mutase (534 aa).

Asp-15 and Ser-65 together coordinate Mn(2+). Ser-65 serves as the catalytic Phosphoserine intermediate. Substrate contacts are provided by residues His-126, 156-157 (RD), Arg-188, Arg-194, 260-263 (RPDR), and Lys-333. Residues Asp-400, His-404, Asp-441, His-442, and His-459 each coordinate Mn(2+).

The protein belongs to the BPG-independent phosphoglycerate mutase family. As to quaternary structure, monomer. Requires Mn(2+) as cofactor.

It catalyses the reaction (2R)-2-phosphoglycerate = (2R)-3-phosphoglycerate. It participates in carbohydrate degradation; glycolysis; pyruvate from D-glyceraldehyde 3-phosphate: step 3/5. Its function is as follows. Catalyzes the interconversion of 2-phosphoglycerate and 3-phosphoglycerate. The chain is 2,3-bisphosphoglycerate-independent phosphoglycerate mutase from Acaryochloris marina (strain MBIC 11017).